A 678-amino-acid polypeptide reads, in one-letter code: DNA ligase (678 aa).

Residues 47 to 51, 96 to 97, and E122 each bind NAD(+); these read DSDYD and SL. K124 acts as the N6-AMP-lysine intermediate in catalysis. NAD(+) contacts are provided by R145, E182, K300, and K324. C418, C421, C436, and C442 together coordinate Zn(2+). The 77-residue stretch at 602 to 678 folds into the BRCT domain; the sequence is AYNESFTGKT…ILEDNLKDLL (77 aa).

This sequence belongs to the NAD-dependent DNA ligase family. LigA subfamily. The cofactor is Mg(2+). Mn(2+) is required as a cofactor.

It catalyses the reaction NAD(+) + (deoxyribonucleotide)n-3'-hydroxyl + 5'-phospho-(deoxyribonucleotide)m = (deoxyribonucleotide)n+m + AMP + beta-nicotinamide D-nucleotide.. Its function is as follows. DNA ligase that catalyzes the formation of phosphodiester linkages between 5'-phosphoryl and 3'-hydroxyl groups in double-stranded DNA using NAD as a coenzyme and as the energy source for the reaction. It is essential for DNA replication and repair of damaged DNA. The polypeptide is DNA ligase (Francisella tularensis subsp. novicida (strain U112)).